The chain runs to 201 residues: Adenylyl-sulfate kinase (201 aa).

35 to 42 (GLSGSGKS) is a binding site for ATP. Residue serine 109 is the Phosphoserine intermediate of the active site.

Belongs to the APS kinase family.

It catalyses the reaction adenosine 5'-phosphosulfate + ATP = 3'-phosphoadenylyl sulfate + ADP + H(+). It participates in sulfur metabolism; hydrogen sulfide biosynthesis; sulfite from sulfate: step 2/3. In terms of biological role, catalyzes the synthesis of activated sulfate. This Erwinia tasmaniensis (strain DSM 17950 / CFBP 7177 / CIP 109463 / NCPPB 4357 / Et1/99) protein is Adenylyl-sulfate kinase.